The following is a 436-amino-acid chain: 3-ketoacyl-CoA thiolase (436 aa).

Catalysis depends on Cys99, which acts as the Acyl-thioester intermediate. Active-site proton acceptor residues include His392 and Cys422.

It belongs to the thiolase-like superfamily. Thiolase family. Heterotetramer of two alpha chains (FadJ) and two beta chains (FadI).

It is found in the cytoplasm. The catalysed reaction is an acyl-CoA + acetyl-CoA = a 3-oxoacyl-CoA + CoA. It functions in the pathway lipid metabolism; fatty acid beta-oxidation. Functionally, catalyzes the final step of fatty acid oxidation in which acetyl-CoA is released and the CoA ester of a fatty acid two carbons shorter is formed. The chain is 3-ketoacyl-CoA thiolase from Enterobacter sp. (strain 638).